Consider the following 495-residue polypeptide: GTPase Der (495 aa).

2 consecutive EngA-type G domains span residues 3–166 (PVVA…VQDE) and 208–381 (IKLA…ACAT). GTP contacts are provided by residues 9-16 (GRPNVGKS), 56-60 (DTGGI), 118-121 (NKTD), 214-221 (GRPNVGKS), 261-265 (DTAGV), and 326-329 (NKWD). Residues 382 to 466 (RRVSTAMLTR…PIRIQFKEGE (85 aa)) form the KH-like domain.

Belongs to the TRAFAC class TrmE-Era-EngA-EngB-Septin-like GTPase superfamily. EngA (Der) GTPase family. In terms of assembly, associates with the 50S ribosomal subunit.

In terms of biological role, GTPase that plays an essential role in the late steps of ribosome biogenesis. In Pectobacterium carotovorum subsp. carotovorum (strain PC1), this protein is GTPase Der.